Here is a 400-residue protein sequence, read N- to C-terminus: Multidrug resistance protein MdtH (400 aa).

A run of 10 helical transmembrane segments spans residues 13–33, 34–54, 99–116, 139–159, 165–185, 214–234, 244–264, 289–309, 340–360, and 365–385; these read YFLL…FPLI, SIRF…ALGL, PWIL…GTLF, LLLM…SWLL, LVCW…AWLL, VLTL…FPIV, AVKW…YPIA, FPVG…LFYL, LGLA…YDIG, and LPEL…YALH.

The protein belongs to the major facilitator superfamily. DHA1 family. MdtH (TC 2.A.1.2.21) subfamily.

Its subcellular location is the cell inner membrane. The polypeptide is Multidrug resistance protein MdtH (Proteus mirabilis (strain HI4320)).